A 147-amino-acid chain; its full sequence is MTGKKSPNGLFAARKLRRKRLKFRWSEREFKIRMLGLKKKYDPLEGAPMARGIVLEKVGVEARQPNSAVRKCVRVQLIKNGRIVTAFVPGDGGLLVVDEHDEVLIEGIGGPRGRSMGDIPGVRYRVVTVNGVSLRAILEGRKQKPQR.

It belongs to the universal ribosomal protein uS12 family. As to quaternary structure, part of the 30S ribosomal subunit.

In terms of biological role, with S4 and S5 plays an important role in translational accuracy. Located at the interface of the 30S and 50S subunits. The protein is Small ribosomal subunit protein uS12 of Hyperthermus butylicus (strain DSM 5456 / JCM 9403 / PLM1-5).